Reading from the N-terminus, the 1553-residue chain is Probable serine/threonine-protein kinase qkgA (1553 aa).

The disordered stretch occupies residues 113–142 (SSSSSSSSTSSSPSLTSSPSSPISTSPPYH). LRR repeat units follow at residues 287-309 (NGTFLLLSKSNITRFPMSIINMC), 311-333 (QLVELDMSNNRITEIPIEITELK), 334-356 (FLKNLNLSDNLINDIPLEICNLT), and 357-378 (LLKVLLLNENPLNNFPSSIVEL). Positions 395 to 619 (SCETWNKVKL…KRLIHESEKS (225 aa)) constitute a Roc domain. Disordered stretches follow at residues 643–696 (NQGR…QQQQ), 955–1019 (ISNS…PSSQ), and 1048–1090 (NQNG…NNNK). 4 stretches are compositionally biased toward low complexity: residues 648 to 675 (SISNSASNSSSSLLNSSSSSSPSLTSKK), 683 to 696 (SQQQQQQHQQQQQQ), 956 to 1018 (SNST…SPSS), and 1059 to 1090 (TTTTTSTSTSTTSTTTPTTTTPTIPIKNNNNK). Positions 694–893 (QQQLQQSIKE…KTYWKDGVLL (200 aa)) constitute a COR domain. A Protein kinase domain is found at 1242–1546 (ILYERQIGEG…QTSYFDSPFL (305 aa)). Residues 1248-1256 (IGEGGFGLI) and K1271 each bind ATP. D1393 acts as the Proton acceptor in catalysis.

It belongs to the protein kinase superfamily. TKL Ser/Thr protein kinase family. ROCO subfamily.

It catalyses the reaction L-seryl-[protein] + ATP = O-phospho-L-seryl-[protein] + ADP + H(+). It carries out the reaction L-threonyl-[protein] + ATP = O-phospho-L-threonyl-[protein] + ADP + H(+). In terms of biological role, involved in growth, and during development, in aggregation. This Dictyostelium discoideum (Social amoeba) protein is Probable serine/threonine-protein kinase qkgA (qkgA-1).